The chain runs to 1405 residues: Tonsoku-like protein (1405 aa).

TPR repeat units follow at residues Ala23–Met56, Ala63–Leu96, Ala163–His196, His203–Phe237, Cys245–Asp278, Lys314–Asn347, and Val355–Ala388. Residues Ile153–Glu181 form an LRR 1 repeat. The stretch at Met439–Lys465 is one LRR 2 repeat. Positions Lys465–Lys535 are disordered. Residues Leu469–Asp483 are compositionally biased toward acidic residues. ANK repeat units lie at residues Lys538–Val567, Ala571–Ile600, and Asp609–Val638. 3 disordered regions span residues Phe695–Arg753, Lys806–Leu827, and Thr841–Gln880. Ser707 and Ser709 each carry phosphoserine. A compositionally biased stretch (basic and acidic residues) spans Leu813–Phe822. The segment covering Thr841 to Gln850 has biased composition (polar residues). Over residues Ser859–Ser874 the composition is skewed to low complexity. Residues Ser893, Ser895, Ser899, and Ser902 each carry the phosphoserine modification. 6 LRR repeats span residues Gln1085–Lys1108, Leu1113–Gly1137, Leu1143–Lys1166, Leu1186–Gln1211, Ala1287–Asp1311, and Leu1333–Met1357.

The protein belongs to the Tonsoku family.

Its subcellular location is the nucleus. The protein localises to the nucleoplasm. The protein resides in the chromosome. Functionally, histone reader involved in homologous recombination-mediated repair of double-strand breaks (DSBs) at stalled or collapsed replication forks. Specifically recognizes and binds histone H3.1. The chain is Tonsoku-like protein from Drosophila melanogaster (Fruit fly).